Reading from the N-terminus, the 287-residue chain is MTTLTGKTVLLTGASRGLGVYIARALAKEQATVVCVSRSQSGLAQTCNAVKAAGGKAIAIPFDVRNTSQLSALVQQAQDIVGPIDVLINNAGIEINGTFANYSLAEIQSIFNTNLLAAMELTRLLLPSMMERGSGRIVNIASLAGKKGVAFNSVYSASKAGLIMWTDAMRQELVGTGVNISVVCPGYVSQTGMTVDTRVSAPKLAGISTPKSVANAVVKAIKNKTTEVIVNQNPITESLTKLMLAVGQISPTSVDRIYRWFGVVDFNQKRAENRVKDGYVAVESHRS.

11–35 contributes to the NAD(+) binding site; it reads LTGASRGLGVYIARALAKEQATVVC. Residue serine 142 coordinates substrate. Tyrosine 155 serves as the catalytic Proton acceptor.

Belongs to the short-chain dehydrogenases/reductases (SDR) family.

In terms of biological role, may be involved in repressing heterocyst differentiation and may be essential for preventing all vegetative cells from differentiating. This Nostoc sp. (strain PCC 7120 / SAG 25.82 / UTEX 2576) protein is Ketoacyl reductase HetN (hetN).